The sequence spans 442 residues: Probable serine/threonine-protein kinase PBL17 (442 aa).

The N-myristoyl glycine moiety is linked to residue glycine 2. Cysteine 4 carries the S-palmitoyl cysteine lipid modification. The residue at position 79 (threonine 79) is a Phosphothreonine. A Protein kinase domain is found at 90–370 (FRPDYILGEG…NHVVEVLETL (281 aa)). Residues 96–104 (LGEGGFGVV) and lysine 125 contribute to the ATP site. At tyrosine 170 the chain carries Phosphotyrosine. Aspartate 220 acts as the Proton acceptor in catalysis. Serine 254 carries the post-translational modification Phosphoserine. 2 positions are modified to phosphothreonine: threonine 255 and threonine 260. Residue tyrosine 268 is modified to Phosphotyrosine. Residues 385–442 (HSRGKSVTLYEASSDSQGTRDGNGQRRRRPESGRSKSEAAVDTEKYVSTLSEPDTTKI) are disordered. Residues 395-406 (EASSDSQGTRDG) show a composition bias toward polar residues. Basic and acidic residues predominate over residues 414–429 (PESGRSKSEAAVDTEK). A compositionally biased stretch (polar residues) spans 430–442 (YVSTLSEPDTTKI).

The protein belongs to the protein kinase superfamily. Ser/Thr protein kinase family.

It localises to the cell membrane. The catalysed reaction is L-seryl-[protein] + ATP = O-phospho-L-seryl-[protein] + ADP + H(+). It catalyses the reaction L-threonyl-[protein] + ATP = O-phospho-L-threonyl-[protein] + ADP + H(+). May be involved in plant defense signaling. The protein is Probable serine/threonine-protein kinase PBL17 of Arabidopsis thaliana (Mouse-ear cress).